The following is a 262-amino-acid chain: MTSEAVFIQVGALADGFAPHGNLLATASLPAGENFTFYVAGSEPQQLVIEDEQTLSWNGKRAPWRATALRPDILFIDFLDPERDNASISAVCNLTQRNATLVYGQLPDEAPRAGRLQPGRTRVALTAVEVRFVFARLDAQPGPLPGFTDALIGMRNQYTYSPTERYEHIYLNDNFYAWQCLDGVEKGLADVDRCHYVQVAEDLYLFVWREKIIPTLGVILIDLQQMRTDGKIMGYQGSDFGALSNFPVGATAKILNVTRHQE.

Positions 1–13 (MTSEAVFIQVGAL) are excised as a propeptide.

This Klebsiella aerogenes (Enterobacter aerogenes) protein is Protein MoaF (moaF).